Reading from the N-terminus, the 303-residue chain is Quinolinate synthase (303 aa).

Iminosuccinate-binding residues include His-24 and Ser-41. A [4Fe-4S] cluster-binding site is contributed by Cys-86. Residues 112 to 114 (YVN) and Ser-129 each bind iminosuccinate. Cys-172 lines the [4Fe-4S] cluster pocket. Iminosuccinate is bound by residues 198 to 200 (HPE) and Thr-215. Cys-260 serves as a coordination point for [4Fe-4S] cluster.

Belongs to the quinolinate synthase family. Type 2 subfamily. Requires [4Fe-4S] cluster as cofactor.

The protein resides in the cytoplasm. It carries out the reaction iminosuccinate + dihydroxyacetone phosphate = quinolinate + phosphate + 2 H2O + H(+). Its pathway is cofactor biosynthesis; NAD(+) biosynthesis; quinolinate from iminoaspartate: step 1/1. Functionally, catalyzes the condensation of iminoaspartate with dihydroxyacetone phosphate to form quinolinate. The sequence is that of Quinolinate synthase from Alkaliphilus metalliredigens (strain QYMF).